The sequence spans 1111 residues: Lon protease homolog, mitochondrial (1111 aa).

The transit peptide at Met1 to Asn21 directs the protein to the mitochondrion. Disordered stretches follow at residues Ile85 to Pro177 and Pro288 to Glu311. Residues Lys88–Glu125 are compositionally biased toward basic and acidic residues. Positions Thr126–Glu135 are enriched in polar residues. The segment covering Gly145–Asn167 has biased composition (gly residues). A Lon N-terminal domain is found at Val185 to Leu450. The span at Asn294–Gly306 shows a compositional bias: basic and acidic residues. Residue Gly602–Thr609 participates in ATP binding. Composition is skewed to basic and acidic residues over residues Glu819 to Glu835 and Glu853 to Gly865. Positions Glu819–Ser866 are disordered. The region spanning Ser899–Asp1085 is the Lon proteolytic domain. Catalysis depends on residues Ser991 and Lys1034.

This sequence belongs to the peptidase S16 family. In terms of assembly, homohexamer or homoheptamer. Organized in a ring with a central cavity.

The protein resides in the mitochondrion matrix. It carries out the reaction Hydrolysis of proteins in presence of ATP.. ATP-dependent serine protease that mediates the selective degradation of misfolded, unassembled or oxidatively damaged polypeptides as well as certain short-lived regulatory proteins in the mitochondrial matrix. May also have a chaperone function in the assembly of inner membrane protein complexes. Participates in the regulation of mitochondrial gene expression and in the maintenance of the integrity of the mitochondrial genome. Binds to mitochondrial DNA in a site-specific manner. This is Lon protease homolog, mitochondrial from Kluyveromyces lactis (strain ATCC 8585 / CBS 2359 / DSM 70799 / NBRC 1267 / NRRL Y-1140 / WM37) (Yeast).